A 185-amino-acid polypeptide reads, in one-letter code: MKAEAVESGEASTIIAAPKRGINRGISIADLILRGVAAIGTFASALTMGTTSETLTIFTQPIMIRAKYNDLPSLTFFVIANSIVCGYLVLSIPLSISHFIRREARITRIILVIFDTAMVELLTAGASAATVVVYLAHKRNANWLAICQQFNNFCERISGSLIGSFASIIMIMLIIITSAVALSRH.

Over 1–25 the chain is Cytoplasmic; that stretch reads MKAEAVESGEASTIIAAPKRGINRG. A helical membrane pass occupies residues 26 to 46; sequence ISIADLILRGVAAIGTFASAL. Residues 47 to 75 are Extracellular-facing; the sequence is TMGTTSETLTIFTQPIMIRAKYNDLPSLT. Residues 76 to 96 form a helical membrane-spanning segment; sequence FFVIANSIVCGYLVLSIPLSI. Over 97-108 the chain is Cytoplasmic; that stretch reads SHFIRREARITR. A helical transmembrane segment spans residues 109–129; sequence IILVIFDTAMVELLTAGASAA. At 130–160 the chain is on the extracellular side; sequence TVVVYLAHKRNANWLAICQQFNNFCERISGS. Residues 161 to 181 traverse the membrane as a helical segment; sequence LIGSFASIIMIMLIIITSAVA. Topologically, residues 182–185 are cytoplasmic; it reads LSRH.

Belongs to the Casparian strip membrane proteins (CASP) family. Homodimer and heterodimers.

Its subcellular location is the cell membrane. Regulates membrane-cell wall junctions and localized cell wall deposition. Required for establishment of the Casparian strip membrane domain (CSD) and the subsequent formation of Casparian strips, a cell wall modification of the root endodermis that determines an apoplastic barrier between the intraorganismal apoplasm and the extraorganismal apoplasm and prevents lateral diffusion. The sequence is that of Casparian strip membrane protein 5 from Populus trichocarpa (Western balsam poplar).